A 203-amino-acid chain; its full sequence is Protein GrpE 2 (203 aa).

Basic and acidic residues predominate over residues 1-12 (MPTRPQEPDRAA). A disordered region spans residues 1-64 (MPTRPQEPDR…APAEDEYTTA (64 aa)). Low complexity predominate over residues 45–56 (GEPGPDAAGPAP).

The protein belongs to the GrpE family. In terms of assembly, homodimer.

It is found in the cytoplasm. Participates actively in the response to hyperosmotic and heat shock by preventing the aggregation of stress-denatured proteins, in association with DnaK and GrpE. It is the nucleotide exchange factor for DnaK and may function as a thermosensor. Unfolded proteins bind initially to DnaJ; upon interaction with the DnaJ-bound protein, DnaK hydrolyzes its bound ATP, resulting in the formation of a stable complex. GrpE releases ADP from DnaK; ATP binding to DnaK triggers the release of the substrate protein, thus completing the reaction cycle. Several rounds of ATP-dependent interactions between DnaJ, DnaK and GrpE are required for fully efficient folding. This Streptomyces avermitilis (strain ATCC 31267 / DSM 46492 / JCM 5070 / NBRC 14893 / NCIMB 12804 / NRRL 8165 / MA-4680) protein is Protein GrpE 2.